Reading from the N-terminus, the 323-residue chain is Beta-ketoacyl-[acyl-carrier-protein] synthase III (323 aa).

Catalysis depends on residues Cys113 and His250. The segment at 251–255 (QANRR) is ACP-binding. The active site involves Asn280.

The protein belongs to the thiolase-like superfamily. FabH family. As to quaternary structure, homodimer.

The protein localises to the cytoplasm. It carries out the reaction malonyl-[ACP] + acetyl-CoA + H(+) = 3-oxobutanoyl-[ACP] + CO2 + CoA. Its pathway is lipid metabolism; fatty acid biosynthesis. Catalyzes the condensation reaction of fatty acid synthesis by the addition to an acyl acceptor of two carbons from malonyl-ACP. Catalyzes the first condensation reaction which initiates fatty acid synthesis and may therefore play a role in governing the total rate of fatty acid production. Possesses both acetoacetyl-ACP synthase and acetyl transacylase activities. Its substrate specificity determines the biosynthesis of branched-chain and/or straight-chain of fatty acids. The protein is Beta-ketoacyl-[acyl-carrier-protein] synthase III of Sinorhizobium medicae (strain WSM419) (Ensifer medicae).